Consider the following 151-residue polypeptide: Decarboxylase nsrE (151 aa).

An EthD domain is found at 31-126; it reads AGMTEEDYHN…VGDHENFADT (96 aa).

It belongs to the tpcK family.

It catalyses the reaction atrochrysone carboxylate + H(+) = atrochrysone + CO2. Its pathway is secondary metabolite biosynthesis. Decarboxylase; part of the gene cluster that mediates the biosynthesis of the tetrahydroxanthone dimer neosartorin, which exhibits antibacterial activity. The two different monomeric units appear to be synthesized by the same set of enzymes, among which the Baeyer-Villiger monooxygenase nsrF is the key enzyme for the divergence of the biosynthetic routes. The pathway begins with the synthesis of atrochrysone thioester by the polyketide synthase nsrB. The atrochrysone carboxyl ACP thioesterase nsrC then breaks the thioester bond and releases the atrochrysone carboxylic acid from AacuL. Atrochrysone carboxylic acid is decarboxylated by the decarboxylase nsrE, and oxidized by the anthrone oxygenase nsrD to yield emodin. Emodin is then reduced to emodin hydroquinone by the oxidoreductase nsrR. A-ring reduction by the short chain dehydrogenase nsrJ, dehydration by the scytalone dehydratase-like protein nsrI and probable spontaneous re-oxidation, results in overall deoxygenation to chrysophanol. The Baeyer-Villiger monooxygenase nsrF accepts chrysophanol as a substrate to insert one oxygen atom at two different positions to yield the precursors of both monomric units. NsrF is promiscuous/flexible in interacting with the 2 (non methylated and methylated) aromatic rings of chrysophanol, thus diverging the biosynthetic pathway at this point. After the hydrolysis of the lactones, methylesterification by the methyltransferase nsrG yields respectively moniliphenone and 2,2',6'-trihydroxy-4-methyl-6-methoxya-cyldiphenylmethanone. The next steps are the hydroxylation by the FAD-dependent monooxygenase nsrK, followed by isomerization by the monooxygenase nsrQ. The short chain dehydrogenase/reductase nsrO then catalyzes the C-5 ketoreduction to give the xanthone skeleton of blennolide C and 5-acetylblennolide A. The acetyltransferase nsrL has a strict substrate specificity and uses only blennolide A but not blennolide C to yield 5-acetylblennolide A as the single-acetylated product. In the final step of the biosynthesis, the heterodimerization of the 2 xanthones, blennolide C and 5-acetylblennolide A, is catalyzed by the cytochrome P450 monooxygenase nsrP. NsrP can utilize at least three different xanthones as its substrates to perform the dimerization reaction. This is Decarboxylase nsrE from Aspergillus novofumigatus (strain IBT 16806).